We begin with the raw amino-acid sequence, 229 residues long: MYPMDRIQQKHARQIDLLENLTAVIQDYPNPACIRDETGKFIFCNTLFHESFLTQDQSAEKWLLSQRDFCELISVTEMEAYRNEHTHLNLVEDVFIQNRFWTISVQSFLNGHRNIILWQFYDAAHVRHKDSYNQKTIVSDDIRNIIRRMSDDSSVSSYVNDVFYLYSTGISHNAIARILNISISTSKKHASLICDYFSVSNKDELIILLYNKKFIYYLYEKAMCIINTR.

It is found in the cytoplasm. This protein is essential for positively regulating the expression of transfer genes that are involved in the conjugal transfer of DNA between bacterial cells. In Escherichia coli (strain K12), this protein is Protein TraJ (traJ).